Consider the following 370-residue polypeptide: Histidinol-phosphate aminotransferase 2 (370 aa).

Lysine 230 carries the N6-(pyridoxal phosphate)lysine modification.

This sequence belongs to the class-II pyridoxal-phosphate-dependent aminotransferase family. Histidinol-phosphate aminotransferase subfamily. As to quaternary structure, homodimer. It depends on pyridoxal 5'-phosphate as a cofactor.

It catalyses the reaction L-histidinol phosphate + 2-oxoglutarate = 3-(imidazol-4-yl)-2-oxopropyl phosphate + L-glutamate. Its pathway is amino-acid biosynthesis; L-histidine biosynthesis; L-histidine from 5-phospho-alpha-D-ribose 1-diphosphate: step 7/9. In Pseudomonas fluorescens (strain Pf0-1), this protein is Histidinol-phosphate aminotransferase 2.